Here is a 182-residue protein sequence, read N- to C-terminus: NADH-quinone oxidoreductase subunit I (182 aa).

4Fe-4S ferredoxin-type domains lie at 52–82 (LTRD…LQKA) and 92–121 (EFFR…LTPD). The [4Fe-4S] cluster site is built by Cys62, Cys65, Cys68, Cys72, Cys101, Cys104, Cys107, and Cys111.

This sequence belongs to the complex I 23 kDa subunit family. As to quaternary structure, NDH-1 is composed of 13 different subunits. Subunits NuoA, H, J, K, L, M, N constitute the membrane sector of the complex. Requires [4Fe-4S] cluster as cofactor.

It is found in the cell inner membrane. The enzyme catalyses a quinone + NADH + 5 H(+)(in) = a quinol + NAD(+) + 4 H(+)(out). Its function is as follows. NDH-1 shuttles electrons from NADH, via FMN and iron-sulfur (Fe-S) centers, to quinones in the respiratory chain. The immediate electron acceptor for the enzyme in this species is believed to be ubiquinone. Couples the redox reaction to proton translocation (for every two electrons transferred, four hydrogen ions are translocated across the cytoplasmic membrane), and thus conserves the redox energy in a proton gradient. This chain is NADH-quinone oxidoreductase subunit I, found in Pseudomonas putida (strain ATCC 47054 / DSM 6125 / CFBP 8728 / NCIMB 11950 / KT2440).